A 170-amino-acid polypeptide reads, in one-letter code: Anaphase-promoting complex subunit SWM1 (170 aa).

Basic and acidic residues-rich tracts occupy residues 48–67 (NTRT…RNSN) and 132–141 (GANEPRKETI). Disordered stretches follow at residues 48–81 (NTRT…MTSE) and 122–141 (LNGG…KETI).

Belongs to the APC13 family. The APC/C is composed of at least 13 subunits that stay tightly associated throughout the cell cycle: APC1, APC2, APC4, APC5, APC9, APC11, CDC16, CDC23, CDC26, CDC27, DOC1, MND2 and SWM1. SWM1 interacts directly with CDC23 and APC5, and is required to tether APC9, CDC16, CDC26 and CDC27 to the complex.

It functions in the pathway protein modification; protein ubiquitination. In terms of biological role, component of the anaphase promoting complex/cyclosome (APC/C), a cell cycle-regulated E3 ubiquitin-protein ligase complex that controls progression through mitosis and the G1 phase of the cell cycle. The APC/C is thought to confer substrate specificity and, in the presence of ubiquitin-conjugating E2 enzymes, it catalyzes the formation of protein-ubiquitin conjugates that are subsequently degraded by the 26S proteasome. In early mitosis, the APC/C is activated by CDC20 and targets securin PDS1, the B-type cyclin CLB5, and other anaphase inhibitory proteins for proteolysis, thereby triggering the separation of sister chromatids at the metaphase-to-anaphase transition. In late mitosis and in G1, degradation of CLB5 allows activation of the APC/C by CDH1, which is needed to destroy CDC20 and the B-type cyclin CLB2 to allow exit from mitosis and creating the low CDK state necessary for cytokinesis and for reforming prereplicative complexes in G1 prior to another round of replication. SWM1 is required for APC/C activity in meiosis. The chain is Anaphase-promoting complex subunit SWM1 (SWM1) from Saccharomyces cerevisiae (strain ATCC 204508 / S288c) (Baker's yeast).